The chain runs to 2180 residues: MMTSPSDYQSNSSLATTYSNAPKLSKALSNKYDYLYEVDILKENQKISDTYLPLLNPYSAFAKRSVTPWSQIRSLVQSKPRHVKEYVAASKLDQHPVFATGEEQFVTLHIPEEFASHWKSHQFTHIHFGAVKIALTYHGRKGQPVVARLALLDTRYLEYQHANLGTAEITLNAGTVFITLFPNFTMSLSDANLSTALKIQVQIQGAPLTKDSIQATLHYQIAWRVQNHAMDLTLPGGEEALFLKIDAGNGATQCTQVPRQLSKEDLIKILPDSWVTNYEKLKEPEEPLRSTEVSMSKRHDKSVAISFDHSHYKKLRNTHHFMGMISDDVIVLDDPETFSKTLPSLMQTHDWIHHFQLDGRAVSWYKDPFDGHCPWDIDCQCYSCLYSEDEEDFEDGFPTKYKGIPRPGSIAERKMQEEANLKKLYEDKDPFVGSLSRPGKYEYLVRYDAPSWAKDPHLTVEPTGWDSDEPILPNQPFITRNTLPKIYMFNPLNYENNFPPLSSFSKDGADHTPKIPKRNVVLPSGAKDPTGDLEATVNWQTENALAQNRMLTTIDRTLKETVTKVDRVSDQSSKNQGLIRVLEQQLQDLNKRICPPGTSLFHFFDQQKSEMASLKEQIRLLKEQPQKNETDTPSYQSSYQPFHNFSSPYMPSNPPNSPFTNFANTPQPQPSLFSQYPIQPKSPNTFDLAKLVWEKKDAIAEEKRAKKKLQKDEVKQKTSLPPESKRPDPQSSSHLGDQFMISDPTLPKVYELNEPSVPSEDTSSQSYISTEESVEDTDSFSVVSEESTQLSQLSSSSNDSPENNENTLPQTFMVRPTEPEISEVEDEVDGMTEEPIPERRPEITPPKMVGTGFHTFSLDDISITKWPERIQDFHTWMLTKQLVEREPFLILSEFTARLSGTLREWWNSVGPDDKNRFLTSQDFTWNIRILYSYFCGDQSQNKEELRRQIFEMKCLSYDRKKIDRHFQRMIKLFYHIGGDISLKQAFISSLPPILSERISALIKERGTSGTQMHVGDIRQTGFYVLDDLCSKRKFFNQMKKMSRDLEKACTKSDLIIKGDKGCSGYCNPSRRRKYKRFKLPSFKERDGRQYRKRRRFFRKSKTSKAMRQKPRSCFTCGKIGHFSRNCPQNKKSIKLISEIQKYTGIDIEDDLESVFSIEDEPSEDTLFSLEFYEEYAGEQYQITSYEAPKTENPPLPKIHTIVEIPQTEVKVYTSKWDKPISVIAFYDTGAAYSIMDPAILPSEYWIPHFRHFGTADDGILTTTVKTKHPITIEFFPGFKYTTKLLGSDIPGKDLLIGFDIYRQLNNKLRIGADGIRWKNQFKRYTEIPRLFQLTTSNELQQLEDVIKNQLCAESHVDFLSKCSHPLWLNQDFFIQLPFKRNENINPTKASHSGMNPEHLQLALKECDELQQFDLIEPSDSQWACEAFYVNKRSEQVRGKLRLVINYQPLNHFLQDDKFPIPNKLTLFSHLSKAKLFSKFDLKSGFWQLGIHPNERPKTGFCIPDRHFQWKVMPFGLKTAPSLFQKAMIKIFQPILFSALVYIDDILLFSETLEDHIKLLNQFISLVKKFGVMLSAKKMILAQNKIQFLGMDFADGTFSPAGHISLELQKFPDTNLSVKQIQQFLGIVNYIRDFIPEVTEHISPLSDMLKKKPPAWGKCQDNAVKQLKQLAQQVKSLHIPSEGKKILQTDASDQYWSAVLLEEHNGKRKICGFASGKFKVSEQHYHSTFKEILAVKNGIKKFNFFLIHTNFLVEMDMRAFPKMIRLNPKIVPNSQLLRWAQWFSPYQFEVKHLKGKDNILADFLSRPHEFSQRLKNSPKVLMFQRRTRSNSTKSKADSSQSTGSSYKLSHNLPENPPEAFDLDYPWDTSVFLERRTFYELQVFKKYGGSILRPFGVDPEYPFAHIFIPNPTDFSEDLLWMFWYLLNHFHILMEFRCSKFSKFDQVNPWMMKFLLWFNNHNYWASLFKCMKGIKKYVVIWFYRPVNYYQGKLCALPHSSIVKWNHVSVLNDEDEYSELQRFIFQENKCIPKEIWPGSLGSWNYGNSDHPHGQWIRDALREYREMNDYFQDAQDPYPAYSKVDLTQEELNTLRITRSYGSSSEDADMVKRSIYTVQSNIVKNSPRKRKGKAKSKSSTRNEKRRAKNKCKYRSLHGEDWWIELGYSTKPSTPSWTQDSSSEPCI.

Disordered regions lie at residues 507-529 (DGAD…AKDP), 624-679 (QPQK…YPIQ), 703-809 (KRAK…NTLP), and 822-848 (SEVE…PPKM). Residues 573–624 (SKNQGLIRVLEQQLQDLNKRICPPGTSLFHFFDQQKSEMASLKEQIRLLKEQ) adopt a coiled-coil conformation. Polar residues-rich tracts occupy residues 631-643 (DTPS…QPFH) and 670-679 (PSLFSQYPIQ). Over residues 703-716 (KRAKKKLQKDEVKQ) the composition is skewed to basic and acidic residues. The span at 759–771 (SEDTSSQSYISTE) shows a compositional bias: polar residues. The segment covering 784 to 807 (SEESTQLSQLSSSSNDSPENNENT) has biased composition (low complexity). The span at 822 to 832 (SEVEDEVDGMT) shows a compositional bias: acidic residues. The CCHC-type zinc finger occupies 1113–1126 (CFTCGKIGHFSRNC). Asp-1227 (for protease activity; shared with dimeric partner) is an active-site residue. Positions 1480, 1543, and 1544 each coordinate Mg(2+). Disordered regions lie at residues 1824–1848 (RRTR…YKLS), 2115–2145 (NIVK…KNKC), and 2161–2180 (YSTK…EPCI). The segment covering 1828–1847 (SNSTKSKADSSQSTGSSYKL) has biased composition (polar residues). Positions 2120 to 2145 (SPRKRKGKAKSKSSTRNEKRRAKNKC) are enriched in basic residues. Residues 2163–2180 (TKPSTPSWTQDSSSEPCI) show a composition bias toward polar residues.

This sequence belongs to the Petuviruses genome polyprotein family.

It catalyses the reaction DNA(n) + a 2'-deoxyribonucleoside 5'-triphosphate = DNA(n+1) + diphosphate. In terms of biological role, encodes presumably for at least four polypeptides: Movement protein (MP), capsid protein (CP), Protease (PR), and reverse transcriptase (RT). This is Genome polyprotein from Petunia (PVCV).